We begin with the raw amino-acid sequence, 34 residues long: Tau-theraphotoxin-Pc1c (34 aa).

Disulfide bonds link Cys2–Cys16, Cys9–Cys21, and Cys15–Cys28. Phe34 is modified (phenylalanine amide).

It belongs to the neurotoxin 10 (Hwtx-1) family. 62 (Vatx) subfamily. Expressed by the venom gland.

It is found in the secreted. Its function is as follows. Selectively activates mammalian TRPV1, or capsaicin receptor, a non-selective cation channel expressed by sensory neurons of the pain pathway. Is more potent than VaTx1 and VaTx2. Interacts with distinct regions of the channel than capsaicin, since it only acts on the extracellular face of the channel, and capsaicin binds to the cytosolic side. Also activates avian TRPV1, which is insensitive to capsaicin. In mice, elicits pain-related behaviors, such as licking and flinching of the affected limb. The paw of toxin-injected mice shows substantial edema. This is Tau-theraphotoxin-Pc1c from Psalmopoeus cambridgei (Trinidad chevron tarantula).